Reading from the N-terminus, the 184-residue chain is Large ribosomal subunit protein uL6 (184 aa).

This sequence belongs to the universal ribosomal protein uL6 family. Part of the 50S ribosomal subunit.

This protein binds to the 23S rRNA, and is important in its secondary structure. It is located near the subunit interface in the base of the L7/L12 stalk, and near the tRNA binding site of the peptidyltransferase center. The chain is Large ribosomal subunit protein uL6 from Thermosipho africanus (strain TCF52B).